Here is a 1757-residue protein sequence, read N- to C-terminus: E3 ubiquitin-protein ligase UBR1 (1757 aa).

The segment at 1–24 (MADEEMDGAERMDVSPEPPLAPQR) is disordered. Position 2 is an N-acetylalanine (Ala-2). The segment at 97–168 (QLCGKVFKSG…TGPFCVDHEP (72 aa)) adopts a UBR-type zinc-finger fold. Residues Cys-99, Cys-112, Cys-115, Cys-124, Cys-127, His-133, and His-136 each coordinate Zn(2+). Phe-148 provides a ligand contact to a peptide. Cys-149 provides a ligand contact to Zn(2+). Asp-150 contacts a peptide. Zn(2+) is bound at residue Cys-151. Asp-153 is a binding site for a peptide. Positions 163 and 166 each coordinate Zn(2+). The interval 842–868 (QHSKAEHMQKKRRKQENKDEALPPPPP) is disordered. A UBC2-binding region (U2BR) region spans residues 1022–1057 (RKRKAEAARLHRQKIMAQMSALQKNFIETHKLMYDN). Positions 1101, 1104, 1162, 1164, 1167, and 1170 each coordinate Zn(2+). The segment at 1101–1204 (CILCQEEQEV…SGEYLCPLCK (104 aa)) adopts an RING-type; atypical zinc-finger fold. A Phosphoserine modification is found at Ser-1182. 5 residues coordinate Zn(2+): Cys-1200, Cys-1203, Cys-1635, Cys-1638, and Cys-1661.

It belongs to the E3 ubiquitin-protein ligase UBR1-like family. As to quaternary structure, interacts with RECQL4. Present in skeletal muscle and liver (at protein level). Broadly expressed, with highest levels in skeletal muscle and heart. Expressed in acinar cells of the pancreas. In testes, expressed primarily in spermatogonia.

It localises to the cytoplasm. It is found in the cytosol. The enzyme catalyses S-ubiquitinyl-[E2 ubiquitin-conjugating enzyme]-L-cysteine + [acceptor protein]-L-lysine = [E2 ubiquitin-conjugating enzyme]-L-cysteine + N(6)-ubiquitinyl-[acceptor protein]-L-lysine.. The protein operates within protein modification; protein ubiquitination. Its function is as follows. E3 ubiquitin-protein ligase which is a component of the N-end rule pathway. Recognizes and binds proteins bearing specific N-terminal residues (N-degrons) that are destabilizing according to the N-end rule, leading to their ubiquitination and subsequent degradation. Recognizes both type-1 and type-2 N-degrons, containing positively charged amino acids (Arg, Lys and His) and bulky and hydrophobic amino acids, respectively. Does not ubiquitinate proteins that are acetylated at the N-terminus. In contrast, it strongly binds methylated N-degrons. Binds leucine and is a negative regulator of the leucine-mTOR signaling pathway, thereby controlling cell growth. The chain is E3 ubiquitin-protein ligase UBR1 from Mus musculus (Mouse).